A 79-amino-acid chain; its full sequence is UPF0175 protein APE_0890a.1 (79 aa).

The protein belongs to the UPF0175 family.

This is UPF0175 protein APE_0890a.1 from Aeropyrum pernix (strain ATCC 700893 / DSM 11879 / JCM 9820 / NBRC 100138 / K1).